A 544-amino-acid chain; its full sequence is E3 ubiquitin-protein ligase makorin-3 (544 aa).

Disordered stretches follow at residues 1–46 and 117–144; these read MEES…VSSA and DLSGRRRSRGGQDAQPRASADRGPKMAT. 2 stretches are compositionally biased toward low complexity: residues 9 to 19 and 36 to 46; these read EAHAAAGAEAG and AAGASAGVSSA. 2 consecutive C3H1-type zinc fingers follow at residues 92-119 and 274-301; these read WTKQILCRYYLHGQCKEGDNCRYSHDLS and PMPLPLCRYAARGQCLRGDRCAYPHGEI. A makorin-type Cys-His region spans residues 302-329; that stretch reads CDMCGQQALHPWDAAQQEAHRRACVEAH. The RING-type zinc-finger motif lies at 347-401; it reads CGICMEVVYEKADPSDRRFGILFSCNHTYCLRCIRRWRSATQFENRISKSCPQCR. A C3H1-type 3 zinc finger spans residues 430-459; that stretch reads GMSQKACRYFAGGLGHCPFGEFCFYKHEYP.

Mainly expressed in mouse brain and reproductive system including testis and ovary. Ubiquitously detected at low levels throughout the entire embryo, but expression is highest in the ventricular layers of the brain.

Its subcellular location is the nucleus. The enzyme catalyses S-ubiquitinyl-[E2 ubiquitin-conjugating enzyme]-L-cysteine + [acceptor protein]-L-lysine = [E2 ubiquitin-conjugating enzyme]-L-cysteine + N(6)-ubiquitinyl-[acceptor protein]-L-lysine.. It functions in the pathway protein modification; protein ubiquitination. Functionally, E3 ubiquitin ligase catalyzing the covalent attachment of ubiquitin moieties onto substrate proteins. Acts as a key developmental timer that helps ensure puberty begins at the appropriate age, by inhibiting premature activation of the reproductive hormone cascade. Epigenetically regulates GNRH1 transcription by disrupting the binding of methyl-DNA binding protein 3/MBD3 to the promoter of GNRH1. Mechanistically, mediates the non-proteolytic ubiquitination of MBD3 at multiple sites with 'Lys27' ubiquitin linkages and thereby regulates the methylation status of the genome, including GNRH1 promoter. Modulates the stability and translation of GNRH1 mRNA by mediating the non-proteolytic ubiquitination of PABP family members PABPC1, PABPC3 and PABPC4 at multiple sites. Also participates in the maintenance of genomic and epigenomic stability by regulating the abundance of APEX2 via 'Lys-48'-linked ubiquitination. The polypeptide is E3 ubiquitin-protein ligase makorin-3 (Mkrn3) (Mus musculus (Mouse)).